The chain runs to 154 residues: Transcriptional repressor NrdR (154 aa).

The segment at 1–22 (MECPNCHKNASRVIDSRPSDEN) is disordered. The segment at 3-34 (CPNCHKNASRVIDSRPSDENRAIRRRRECENC) is a zinc-finger region. The 91-residue stretch at 49–139 (LLVIKNDGTR…IYRQFKDVSG (91 aa)) folds into the ATP-cone domain.

Belongs to the NrdR family. Zn(2+) serves as cofactor.

Negatively regulates transcription of bacterial ribonucleotide reductase nrd genes and operons by binding to NrdR-boxes. In Lactobacillus gasseri (strain ATCC 33323 / DSM 20243 / BCRC 14619 / CIP 102991 / JCM 1131 / KCTC 3163 / NCIMB 11718 / NCTC 13722 / AM63), this protein is Transcriptional repressor NrdR.